The primary structure comprises 368 residues: 4-hydroxy-3-methylbut-2-en-1-yl diphosphate synthase (flavodoxin) (368 aa).

[4Fe-4S] cluster is bound by residues Cys-271, Cys-274, Cys-306, and Glu-313.

The protein belongs to the IspG family. Requires [4Fe-4S] cluster as cofactor.

The catalysed reaction is (2E)-4-hydroxy-3-methylbut-2-enyl diphosphate + oxidized [flavodoxin] + H2O + 2 H(+) = 2-C-methyl-D-erythritol 2,4-cyclic diphosphate + reduced [flavodoxin]. Its pathway is isoprenoid biosynthesis; isopentenyl diphosphate biosynthesis via DXP pathway; isopentenyl diphosphate from 1-deoxy-D-xylulose 5-phosphate: step 5/6. Its function is as follows. Converts 2C-methyl-D-erythritol 2,4-cyclodiphosphate (ME-2,4cPP) into 1-hydroxy-2-methyl-2-(E)-butenyl 4-diphosphate. This is 4-hydroxy-3-methylbut-2-en-1-yl diphosphate synthase (flavodoxin) from Haemophilus influenzae (strain 86-028NP).